Here is a 1941-residue protein sequence, read N- to C-terminus: WD repeat-containing protein 81 (1941 aa).

Residues 1–27 (MAQGSGGREGALRTPAGGWHSPPSPDM) are disordered. The tract at residues 1 to 650 (MAQGSGGREG…TPCEASWTRD (650 aa)) is necessary and sufficient for the interaction with SQSTM1. A BEACH domain is found at 337–614 (GQPTGQEELR…IPKLLVQTIQ (278 aa)). Disordered stretches follow at residues 618 to 637 (GRED…GRPV), 694 to 718 (VASA…EEGR), 1022 to 1074 (SKDL…VSFH), 1097 to 1217 (PQEA…EGKE), 1523 to 1556 (PSSR…DGHS), and 1569 to 1602 (QIPN…DNAL). Over residues 1137 to 1146 (LRSGDSSQDL) the composition is skewed to polar residues. The span at 1151–1174 (GSEEEEEEEDSCVVLEEEEGEQEE) shows a compositional bias: acidic residues. The span at 1586 to 1595 (SGVGGGGLGS) shows a compositional bias: gly residues. WD repeat units lie at residues 1639-1677 (IRLQ…LWPL), 1686-1724 (ETAP…VWDP), 1729-1769 (TLRT…FVDC), 1777-1815 (EFRL…LLDT), 1819-1856 (LVLR…VWKE), 1860-1896 (KPTH…VCSL), and 1902-1941 (QATT…RLLA).

The protein belongs to the WD repeat WDR81 family. In terms of assembly, interacts with WDR91; involved in early to late endosome cargo transport. Interacts with BECN1; negatively regulates the PI3 kinase/PI3K activity associated with endosomal membranes. Interacts with SQSTM1; the interaction is direct and regulates the interaction of SQSTM1 with ubiquitinated proteins. Interacts with MAP1LC3C; recruits MAP1LC3C to ubiquitinated protein aggregates in the aggrephagy process. In terms of tissue distribution, widely expressed. In the brain, highest levels in cerebellum and corpus callosum.

It localises to the early endosome membrane. It is found in the late endosome membrane. The protein localises to the lysosome membrane. The protein resides in the cytoplasmic vesicle. Its subcellular location is the autophagosome membrane. It localises to the mitochondrion. It is found in the cytoplasm. The protein localises to the cytosol. Its function is as follows. Functions as a negative regulator of the PI3 kinase/PI3K activity associated with endosomal membranes via BECN1, a core subunit of the PI3K complex. By modifying the phosphatidylinositol 3-phosphate/PtdInsP3 content of endosomal membranes may regulate endosome fusion, recycling, sorting and early to late endosome transport. It is for instance, required for the delivery of cargos like BST2/tetherin from early to late endosome and thereby participates indirectly to their degradation by the lysosome. May also play a role in aggrephagy, the macroautophagic degradation of ubiquitinated protein aggregates. In this process, may regulate the interaction of SQSTM1 with ubiquitinated proteins and also recruit MAP1LC3C. May also be involved in maintenance of normal mitochondrial structure and organization. This is WD repeat-containing protein 81 from Homo sapiens (Human).